A 406-amino-acid chain; its full sequence is Lysine-specific demethylase 8 (406 aa).

Basic and acidic residues predominate over residues lysine 143–serine 152. Residues lysine 143–glutamate 162 are disordered. The 137-residue stretch at aspartate 270–serine 406 folds into the JmjC domain. Residues histidine 311 and aspartate 313 each coordinate Fe cation.

Fe(2+) is required as a cofactor.

It localises to the nucleus. The enzyme catalyses N(6),N(6)-dimethyl-L-lysyl(36)-[histone H3] + 2 2-oxoglutarate + 2 O2 = L-lysyl(36)-[histone H3] + 2 formaldehyde + 2 succinate + 2 CO2. Functionally, histone demethylase required for G2/M phase cell cycle progression. Specifically demethylates dimethylated 'Lys-36' (H3K36me2) of histone H3, an epigenetic repressive mark, thereby acting as a transcription activator. May play a role in the regulation of the circadian clock. The protein is Lysine-specific demethylase 8 (kdm8) of Danio rerio (Zebrafish).